We begin with the raw amino-acid sequence, 28 residues long: Vasoactive intestinal peptide (28 aa).

Asparagine amide is present on N28.

This sequence belongs to the glucagon family.

Its subcellular location is the secreted. VIP is a neuropeptide involved in a diverse array of physiological processes through activating the PACAP subfamily of class B1 G protein-coupled receptors: VIP receptor 1 (VPR1) and VIP receptor 2 (VPR2). Abundantly expressed throughout the CNS and peripheral nervous systems where they primarily exert neuroprotective and immune modulatory roles. Also causes vasodilation, lowers arterial blood pressure, stimulates myocardial contractility, increases glycogenolysis and relaxes the smooth muscle of trachea, stomach and gall bladder. In Canis lupus familiaris (Dog), this protein is Vasoactive intestinal peptide (VIP).